Reading from the N-terminus, the 399-residue chain is tRNA-specific 2-thiouridylase MnmA (399 aa).

ATP contacts are provided by residues 18–25 (AMSGGVDS) and Leu44. The active-site Nucleophile is Cys112. Residues Cys112 and Cys213 are joined by a disulfide bond. An ATP-binding site is contributed by Gly136. Residues 163 to 165 (RDQ) are interaction with tRNA. Cys213 acts as the Cysteine persulfide intermediate in catalysis.

Belongs to the MnmA/TRMU family.

It is found in the cytoplasm. It catalyses the reaction S-sulfanyl-L-cysteinyl-[protein] + uridine(34) in tRNA + AH2 + ATP = 2-thiouridine(34) in tRNA + L-cysteinyl-[protein] + A + AMP + diphosphate + H(+). Functionally, catalyzes the 2-thiolation of uridine at the wobble position (U34) of tRNA, leading to the formation of s(2)U34. This is tRNA-specific 2-thiouridylase MnmA from Rhizobium rhizogenes (strain K84 / ATCC BAA-868) (Agrobacterium radiobacter).